The primary structure comprises 308 residues: Ribonuclease Z (308 aa).

Zn(2+)-binding residues include His-60, His-62, Asp-64, His-65, His-140, Asp-209, and His-269. Asp-64 acts as the Proton acceptor in catalysis.

It belongs to the RNase Z family. In terms of assembly, homodimer. It depends on Zn(2+) as a cofactor.

It carries out the reaction Endonucleolytic cleavage of RNA, removing extra 3' nucleotides from tRNA precursor, generating 3' termini of tRNAs. A 3'-hydroxy group is left at the tRNA terminus and a 5'-phosphoryl group is left at the trailer molecule.. Functionally, zinc phosphodiesterase, which displays some tRNA 3'-processing endonuclease activity. Probably involved in tRNA maturation, by removing a 3'-trailer from precursor tRNA. The sequence is that of Ribonuclease Z from Methanococcus maripaludis (strain C6 / ATCC BAA-1332).